A 257-amino-acid polypeptide reads, in one-letter code: Zinc uptake system ATP-binding protein ZurA (257 aa).

Residues Ile-5–Glu-241 form the ABC transporter domain. Residue Gly-37–Ser-44 participates in ATP binding.

This sequence belongs to the ABC transporter superfamily.

Functionally, involved in a zinc uptake transport system. The sequence is that of Zinc uptake system ATP-binding protein ZurA (zurA) from Listeria innocua serovar 6a (strain ATCC BAA-680 / CLIP 11262).